Here is a 469-residue protein sequence, read N- to C-terminus: MTTKTRFAPSPTGFLHVGGARTALYSWLHARANNGEFVLRIEDTDIERSTQEACDAILDGMNWLGLTWDEGPYYQTKRFDRYNEIIEQMLDKGTAYKCYCSRERIESMREDQAAQGLQQKYDGCCRNLAPRDTDEPFVIRFKNPIEGSVIFDDHVRGRIEISNDMLDDLIIKRTDGVPTYNFCVVVDDWDMGITCVVRGEDHINNTPRQINILKALGAPIPEYAHVSMILGDDGAKLSKRHGAVGVMQYRDDGYLPEALLNYLVRLGWSHGDQEIFSMEELKTLFKLDDINKAASAFNTDKLIWLNQHYIKSLDPVYVASHLQWHMDDQKIDTSNGPALTEIVTALSERAKTLKELAASSRYFYEDFDNFDEAQAKKHLRGVALEPLTLFNQKLSELNDWSVENIHNVIEATATELDVGMGKVGMPLRVAVTGAGQSPALDLTLFLIGKERSAQRISKAIEFVADRINS.

Residues proline 9–glycine 19 carry the 'HIGH' region motif. Positions lysine 236–arginine 240 match the 'KMSKS' region motif. Lysine 239 serves as a coordination point for ATP.

Belongs to the class-I aminoacyl-tRNA synthetase family. Glutamate--tRNA ligase type 1 subfamily. Monomer.

The protein resides in the cytoplasm. It catalyses the reaction tRNA(Glu) + L-glutamate + ATP = L-glutamyl-tRNA(Glu) + AMP + diphosphate. Catalyzes the attachment of glutamate to tRNA(Glu) in a two-step reaction: glutamate is first activated by ATP to form Glu-AMP and then transferred to the acceptor end of tRNA(Glu). This chain is Glutamate--tRNA ligase, found in Shewanella frigidimarina (strain NCIMB 400).